The chain runs to 254 residues: Trans-aconitate 2-methyltransferase (254 aa).

Belongs to the methyltransferase superfamily. Tam family.

It localises to the cytoplasm. It catalyses the reaction trans-aconitate + S-adenosyl-L-methionine = (E)-3-(methoxycarbonyl)pent-2-enedioate + S-adenosyl-L-homocysteine. Its function is as follows. Catalyzes the S-adenosylmethionine monomethyl esterification of trans-aconitate. The sequence is that of Trans-aconitate 2-methyltransferase from Mycobacterium sp. (strain JLS).